The sequence spans 751 residues: Ribosome biogenesis protein ERB1 (751 aa).

Disordered regions lie at residues 1-140 and 289-336; these read MALT…GNVP and SEPS…DPED. 2 stretches are compositionally biased toward acidic residues: residues 34-92 and 119-129; these read LTDE…SDSD and IEPDYDSDSST. The segment covering 294-305 has biased composition (pro residues); the sequence is SQPPPLPAPKRP. Basic and acidic residues predominate over residues 323-336; sequence EEEKQEWLKQDPED. 6 WD repeats span residues 410–449, 536–580, 582–621, 622–661, 665–704, and 720–751; these read HPKG…EIRR, PSSG…APFK, IKGA…KTLQ, PGIR…KPYK, YHSR…DLMT, and TDGL…VWCS.

Belongs to the WD repeat BOP1/ERB1 family. As to quaternary structure, component of the NOP7 complex, composed of ERB1, NOP7 and YTM1. The complex is held together by ERB1, which interacts with NOP7 via its N-terminal domain and with YTM1 via a high-affinity interaction between the seven-bladed beta-propeller domains of the 2 proteins. The NOP7 complex associates with the 66S pre-ribosome.

Its subcellular location is the nucleus. The protein resides in the nucleolus. The protein localises to the nucleoplasm. Its function is as follows. Component of the NOP7 complex, which is required for maturation of the 25S and 5.8S ribosomal RNAs and formation of the 60S ribosome. The chain is Ribosome biogenesis protein ERB1 from Coprinopsis cinerea (strain Okayama-7 / 130 / ATCC MYA-4618 / FGSC 9003) (Inky cap fungus).